The following is a 102-amino-acid chain: MNKLMKQAQKIQEKMKLIQEEISKLEAIGESGAGLVKIKLNGSRYCNYVKIDNSLLKDKEMLEDLIVAAFNDAIRRISEIQQEKIASVSSSIQIPEGFKMPF.

The protein belongs to the YbaB/EbfC family. Homodimer.

Its subcellular location is the cytoplasm. It localises to the nucleoid. In terms of biological role, binds to DNA and alters its conformation. May be involved in regulation of gene expression, nucleoid organization and DNA protection. This is Nucleoid-associated protein WIGBR5260 from Wigglesworthia glossinidia brevipalpis.